The following is a 106-amino-acid chain: Ig kappa chain C region, B allele (106 aa).

An Ig-like domain is found at 5–102 (PTVSIFPPST…SSSPVVKSFN (98 aa)). Cysteines 26 and 86 form a disulfide.

The sequence is that of Ig kappa chain C region, B allele from Rattus norvegicus (Rat).